A 67-amino-acid chain; its full sequence is Conotoxin Im3.1 (67 aa).

A signal peptide spans 1–20 (MMSTLVVLLTICLLMLPLTA). A propeptide spanning residues 21–52 (RQLDADQLADQLAERMEDISADQNRWFDPVKR) is cleaved from the precursor. Disulfide bonds link Cys53–Cys63, Cys54–Cys61, and Cys59–Cys64.

It belongs to the conotoxin M superfamily. Expressed by the venom duct.

It is found in the secreted. Functionally, probable neurotoxin. The polypeptide is Conotoxin Im3.1 (Conus imperialis (Imperial cone)).